We begin with the raw amino-acid sequence, 279 residues long: MAIRKLAPVTPGSRFMSYPGFDEITKSEPEKSLLVPVKRTGGRNRAGRITSRHMGGGHKRHYRIIDFKRNKDGVPATVASIEYDPNRSSRIALLHYNDGEKRYILAPKGLKVGEKVESGEKVEIKTGNTMPLKNIPLGTDIHNVEMRAGKGGQIVRSAGAFAVLAAREGDYVTLKLPSGEIRKVRVECRATIGVVGNAEHENIVLGKAGRSRWLGIRPQTRGMAMNPVDHPMGGGEGKSKSGGGRRHPKSPWGQLAKGLKTRNKKKASQKLIVRGRNAK.

The interval 222–279 (GMAMNPVDHPMGGGEGKSKSGGGRRHPKSPWGQLAKGLKTRNKKKASQKLIVRGRNAK) is disordered. Positions 232–242 (MGGGEGKSKSG) are enriched in gly residues. The segment covering 259-268 (LKTRNKKKAS) has biased composition (basic residues).

Belongs to the universal ribosomal protein uL2 family. In terms of assembly, part of the 50S ribosomal subunit. Forms a bridge to the 30S subunit in the 70S ribosome.

Functionally, one of the primary rRNA binding proteins. Required for association of the 30S and 50S subunits to form the 70S ribosome, for tRNA binding and peptide bond formation. It has been suggested to have peptidyltransferase activity; this is somewhat controversial. Makes several contacts with the 16S rRNA in the 70S ribosome. This Chlorobium phaeobacteroides (strain DSM 266 / SMG 266 / 2430) protein is Large ribosomal subunit protein uL2.